Reading from the N-terminus, the 64-residue chain is uncharacterized protein (64 aa).

The protein localises to the mitochondrion. This is an uncharacterized protein from Marchantia polymorpha (Common liverwort).